We begin with the raw amino-acid sequence, 121 residues long: Small ribosomal subunit protein bS16 (121 aa).

The segment at 80–121 is disordered; it reads AGVREKTERNNPNKAKPGKKAQERAEEKAAKAAEAAEAADAE. 2 stretches are compositionally biased toward basic and acidic residues: residues 81 to 90 and 99 to 110; these read GVREKTERNN and KAQERAEEKAAK.

This sequence belongs to the bacterial ribosomal protein bS16 family.

This chain is Small ribosomal subunit protein bS16, found in Ruegeria sp. (strain TM1040) (Silicibacter sp.).